Reading from the N-terminus, the 160-residue chain is 2-C-methyl-D-erythritol 2,4-cyclodiphosphate synthase (160 aa).

Asp-8 and His-10 together coordinate a divalent metal cation. Residues 8 to 10 and 34 to 35 contribute to the 4-CDP-2-C-methyl-D-erythritol 2-phosphate site; these read DVH and HS. His-42 is an a divalent metal cation binding site. Residues 56 to 58, 61 to 65, 100 to 106, 132 to 135, Phe-139, and Arg-142 contribute to the 4-CDP-2-C-methyl-D-erythritol 2-phosphate site; these read DIG, FPDTD, AQAPKML, and TTTE.

The protein belongs to the IspF family. In terms of assembly, homotrimer. It depends on a divalent metal cation as a cofactor.

The catalysed reaction is 4-CDP-2-C-methyl-D-erythritol 2-phosphate = 2-C-methyl-D-erythritol 2,4-cyclic diphosphate + CMP. The protein operates within isoprenoid biosynthesis; isopentenyl diphosphate biosynthesis via DXP pathway; isopentenyl diphosphate from 1-deoxy-D-xylulose 5-phosphate: step 4/6. Involved in the biosynthesis of isopentenyl diphosphate (IPP) and dimethylallyl diphosphate (DMAPP), two major building blocks of isoprenoid compounds. Catalyzes the conversion of 4-diphosphocytidyl-2-C-methyl-D-erythritol 2-phosphate (CDP-ME2P) to 2-C-methyl-D-erythritol 2,4-cyclodiphosphate (ME-CPP) with a corresponding release of cytidine 5-monophosphate (CMP). This is 2-C-methyl-D-erythritol 2,4-cyclodiphosphate synthase from Proteus mirabilis (strain HI4320).